The chain runs to 302 residues: Glutaminase (302 aa).

Residues S61, N111, E155, N162, Y186, Y238, and V256 each coordinate substrate.

This sequence belongs to the glutaminase family. In terms of assembly, homotetramer.

The catalysed reaction is L-glutamine + H2O = L-glutamate + NH4(+). The polypeptide is Glutaminase (Pseudomonas fluorescens (strain SBW25)).